Reading from the N-terminus, the 739-residue chain is Poly(A) polymerase alpha (739 aa).

Over residues 1–17 (MPFPVTTQGSQQTQPPQ) the composition is skewed to low complexity. A disordered region spans residues 1-22 (MPFPVTTQGSQQTQPPQRHYGI). 2 positions are modified to phosphoserine: Ser-10 and Ser-24. ATP-binding positions include 100-102 (FGS), Thr-109, 113-115 (DID), Asp-167, Lys-228, Tyr-237, and 246-247 (GV). Mg(2+) contacts are provided by Asp-113, Asp-115, and Asp-167. Glycyl lysine isopeptide (Lys-Gly) (interchain with G-Cter in SUMO) cross-links involve residues Lys-444, Lys-445, Lys-506, and Lys-507. Positions 490–507 (RKQLHQLLPSHVLQKRKK) match the Nuclear localization signal 1 motif. Residues 508-643 (HSTEGVKLTA…TKVPNPIVGV (136 aa)) form a ser/Thr-rich region. Residues 523 to 534 (LDLSMDSDNSMS) are compositionally biased toward low complexity. The segment at 523–725 (LDLSMDSDNS…SDIPALPANP (203 aa)) is disordered. Residues 535-557 (VPSPTSAMKTSPLNSSGSSQGRN) show a composition bias toward polar residues. Residue Ser-537 is modified to Phosphoserine; by MAPK. At Ser-558 the chain carries Phosphoserine. Residues 566–582 (ASVTSIQASEVSVPQAN) are compositionally biased toward polar residues. Composition is skewed to low complexity over residues 583–594 (SSESPGGPSSES) and 611–622 (TVSRVVSSTRLV). An N6-acetyllysine mark is found at Lys-635 and Lys-644. Positions 644–659 (KRTSSPNKEESPKKTK) match the Nuclear localization signal 2 motif. Composition is skewed to basic and acidic residues over residues 650–660 (NKEESPKKTKT) and 676–686 (GHDKTETKEQV). The tract at residues 671–739 (CLALSGHDKT…KNSIKLRLNR (69 aa)) is required for interaction with NUDT21. The segment covering 691–715 (SAVQSETVPASASLLASQKTSSTDL) has biased composition (polar residues). At Lys-730 the chain carries N6-acetyllysine; alternate. A Glycyl lysine isopeptide (Lys-Gly) (interchain with G-Cter in SUMO); alternate cross-link involves residue Lys-730. Ser-732 is subject to Phosphoserine. Lys-734 is subject to N6-acetyllysine; alternate. A Glycyl lysine isopeptide (Lys-Gly) (interchain with G-Cter in SUMO); alternate cross-link involves residue Lys-734.

It belongs to the poly(A) polymerase family. As to quaternary structure, monomer. Found in a complex with CPSF1, FIP1L1 and PAPOLA. Interacts with AHCYL1 and FIP1L1; the interaction with AHCYL1 seems to increase interaction with FIP1L1. Interacts with NUDT21; the interaction is diminished by acetylation. Interacts with KPNB1; the interaction promotes PAP nuclear import and is inhibited by acetylation of PAP. It depends on Mg(2+) as a cofactor. The cofactor is Mn(2+). In terms of processing, polysumoylated. Varying sumoylation depending on tissue- and cell-type. Highly sumoylated in bladder and NIH 3T3 cells. Sumoylation is required for nuclear localization and enhances PAP stability. Desumoylated by SENP1. Inhibits polymerase activity. Hyperphosphorylation on multiple CDK2 consensus and non-consensus sites in the C-terminal Ser/Thr-rich region represses PAP activity in late M-phase. Phosphorylation/dephosphorylation may regulate the interaction between PAP and CPSF. Post-translationally, acetylated in the C-terminus. Acetylation decreases interaction with NUDT21 and KPNB1, and inhibits nuclear localization through inhibiting binding to the importin alpha/beta complex. As to expression, expressed in brain, thymus, lung, kidney, bladder, testis and spleen.

The protein localises to the nucleus. The enzyme catalyses RNA(n) + ATP = RNA(n)-3'-adenine ribonucleotide + diphosphate. Functionally, polymerase that creates the 3'-poly(A) tail of mRNA's. Also required for the endoribonucleolytic cleavage reaction at some polyadenylation sites. May acquire specificity through interaction with a cleavage and polyadenylation specificity factor (CPSF) at its C-terminus. The polypeptide is Poly(A) polymerase alpha (Papola) (Mus musculus (Mouse)).